Consider the following 155-residue polypeptide: SsrA-binding protein (155 aa).

The protein belongs to the SmpB family.

Its subcellular location is the cytoplasm. Its function is as follows. Required for rescue of stalled ribosomes mediated by trans-translation. Binds to transfer-messenger RNA (tmRNA), required for stable association of tmRNA with ribosomes. tmRNA and SmpB together mimic tRNA shape, replacing the anticodon stem-loop with SmpB. tmRNA is encoded by the ssrA gene; the 2 termini fold to resemble tRNA(Ala) and it encodes a 'tag peptide', a short internal open reading frame. During trans-translation Ala-aminoacylated tmRNA acts like a tRNA, entering the A-site of stalled ribosomes, displacing the stalled mRNA. The ribosome then switches to translate the ORF on the tmRNA; the nascent peptide is terminated with the 'tag peptide' encoded by the tmRNA and targeted for degradation. The ribosome is freed to recommence translation, which seems to be the essential function of trans-translation. The protein is SsrA-binding protein of Streptococcus pyogenes serotype M5 (strain Manfredo).